Here is a 162-residue protein sequence, read N- to C-terminus: Protein NrdI (162 aa).

This sequence belongs to the NrdI family.

Its function is as follows. Probably involved in ribonucleotide reductase function. This chain is Protein NrdI, found in Streptococcus pyogenes serotype M1.